A 193-amino-acid polypeptide reads, in one-letter code: dCTP deaminase (193 aa).

DCTP-binding positions include 110–115 (RSSLAR), D128, 136–138 (VLE), Y171, K178, and Q182. E138 functions as the Proton donor/acceptor in the catalytic mechanism.

The protein belongs to the dCTP deaminase family. In terms of assembly, homotrimer.

It catalyses the reaction dCTP + H2O + H(+) = dUTP + NH4(+). It participates in pyrimidine metabolism; dUMP biosynthesis; dUMP from dCTP (dUTP route): step 1/2. Catalyzes the deamination of dCTP to dUTP. In Escherichia coli (strain K12 / MC4100 / BW2952), this protein is dCTP deaminase.